Consider the following 449-residue polypeptide: GTPase Der (449 aa).

EngA-type G domains follow at residues 4–174 (PIVA…PPKT) and 183–358 (LRIA…VQRQ). GTP contacts are provided by residues 10 to 17 (GRPNVGKS), 57 to 61 (DTAGV), 126 to 129 (NKCD), 189 to 196 (GRPNVGKS), 236 to 240 (DTAGI), and 301 to 304 (NKWD). The 86-residue stretch at 359–444 (KRVPTSELNN…PIVIVFRSRE (86 aa)) folds into the KH-like domain.

It belongs to the TRAFAC class TrmE-Era-EngA-EngB-Septin-like GTPase superfamily. EngA (Der) GTPase family. As to quaternary structure, associates with the 50S ribosomal subunit.

GTPase that plays an essential role in the late steps of ribosome biogenesis. This Chloroflexus aurantiacus (strain ATCC 29366 / DSM 635 / J-10-fl) protein is GTPase Der.